The sequence spans 330 residues: Glycerol-3-phosphate dehydrogenase [NAD(P)+] (330 aa).

The NADPH site is built by S10, W11, R31, and K105. Residues K105, G135, and S137 each coordinate sn-glycerol 3-phosphate. A139 contacts NADPH. 5 residues coordinate sn-glycerol 3-phosphate: K190, D243, S253, R254, and N255. Catalysis depends on K190, which acts as the Proton acceptor. R254 is a binding site for NADPH. NADPH-binding residues include V278 and E280.

The protein belongs to the NAD-dependent glycerol-3-phosphate dehydrogenase family.

Its subcellular location is the cytoplasm. The enzyme catalyses sn-glycerol 3-phosphate + NAD(+) = dihydroxyacetone phosphate + NADH + H(+). It carries out the reaction sn-glycerol 3-phosphate + NADP(+) = dihydroxyacetone phosphate + NADPH + H(+). It functions in the pathway membrane lipid metabolism; glycerophospholipid metabolism. Catalyzes the reduction of the glycolytic intermediate dihydroxyacetone phosphate (DHAP) to sn-glycerol 3-phosphate (G3P), the key precursor for phospholipid synthesis. This is Glycerol-3-phosphate dehydrogenase [NAD(P)+] from Solidesulfovibrio magneticus (strain ATCC 700980 / DSM 13731 / RS-1) (Desulfovibrio magneticus).